The primary structure comprises 194 residues: ATP-dependent Clp protease proteolytic subunit (194 aa).

The active-site Nucleophile is serine 98. Histidine 123 is an active-site residue.

Belongs to the peptidase S14 family. In terms of assembly, fourteen ClpP subunits assemble into 2 heptameric rings which stack back to back to give a disk-like structure with a central cavity, resembling the structure of eukaryotic proteasomes.

The protein resides in the cytoplasm. It catalyses the reaction Hydrolysis of proteins to small peptides in the presence of ATP and magnesium. alpha-casein is the usual test substrate. In the absence of ATP, only oligopeptides shorter than five residues are hydrolyzed (such as succinyl-Leu-Tyr-|-NHMec, and Leu-Tyr-Leu-|-Tyr-Trp, in which cleavage of the -Tyr-|-Leu- and -Tyr-|-Trp bonds also occurs).. Functionally, cleaves peptides in various proteins in a process that requires ATP hydrolysis. Has a chymotrypsin-like activity. Plays a major role in the degradation of misfolded proteins. This chain is ATP-dependent Clp protease proteolytic subunit, found in Sodalis glossinidius (strain morsitans).